The chain runs to 397 residues: ATP phosphoribosyltransferase regulatory subunit (397 aa).

Belongs to the class-II aminoacyl-tRNA synthetase family. HisZ subfamily. As to quaternary structure, heteromultimer composed of HisG and HisZ subunits.

It localises to the cytoplasm. The protein operates within amino-acid biosynthesis; L-histidine biosynthesis; L-histidine from 5-phospho-alpha-D-ribose 1-diphosphate: step 1/9. Required for the first step of histidine biosynthesis. May allow the feedback regulation of ATP phosphoribosyltransferase activity by histidine. This is ATP phosphoribosyltransferase regulatory subunit from Nitrosococcus oceani (strain ATCC 19707 / BCRC 17464 / JCM 30415 / NCIMB 11848 / C-107).